Here is a 500-residue protein sequence, read N- to C-terminus: Chromosomal replication initiator protein DnaA (500 aa).

The tract at residues 1-37 (MSDTPFGDADHPRPAPIHPDAVLPPPMSSQSADNDPT) is disordered. Positions 1 to 103 (MSDTPFGDAD…EELLSDHFHK (103 aa)) are domain I, interacts with DnaA modulators. Residues 14 to 27 (PAPIHPDAVLPPPM) are compositionally biased toward pro residues. Positions 103–161 (KAIHLAITIDPDLELALGAPDHEDEEEEVPPAQFVPKVTVGVTEPSARPTTTIDDDEGN) are domain II. The tract at residues 162 to 378 (RLNPKYTFDS…GALIRVTAFA (217 aa)) is domain III, AAA+ region. Residues G206, G208, K209, and T210 each contribute to the ATP site. Residues 379–500 (SLNQQPVDIS…SEITNRIKQY (122 aa)) form a domain IV, binds dsDNA region.

The protein belongs to the DnaA family. Oligomerizes as a right-handed, spiral filament on DNA at oriC.

It is found in the cytoplasm. Its function is as follows. Plays an essential role in the initiation and regulation of chromosomal replication. ATP-DnaA binds to the origin of replication (oriC) to initiate formation of the DNA replication initiation complex once per cell cycle. Binds the DnaA box (a 9 base pair repeat at the origin) and separates the double-stranded (ds)DNA. Forms a right-handed helical filament on oriC DNA; dsDNA binds to the exterior of the filament while single-stranded (ss)DNA is stabiized in the filament's interior. The ATP-DnaA-oriC complex binds and stabilizes one strand of the AT-rich DNA unwinding element (DUE), permitting loading of DNA polymerase. After initiation quickly degrades to an ADP-DnaA complex that is not apt for DNA replication. Binds acidic phospholipids. This chain is Chromosomal replication initiator protein DnaA, found in Cutibacterium acnes (strain DSM 16379 / KPA171202) (Propionibacterium acnes).